The primary structure comprises 128 residues: MEVVNALGRRKRAIARVFVSEGTGKITINKRDLAEYFPSTILQYVVKQPLNKLGAAEKYDIKVNLCGGGFTGQSQALRLAIARALIKMNAEDKAALRAEGFMTRDPRSVERKKPGQPKARRRFQFSKR.

The disordered stretch occupies residues 105–128 (DPRSVERKKPGQPKARRRFQFSKR). Residues 114–128 (PGQPKARRRFQFSKR) show a composition bias toward basic residues.

The protein belongs to the universal ribosomal protein uS9 family.

The chain is Small ribosomal subunit protein uS9 from Bacteroides thetaiotaomicron (strain ATCC 29148 / DSM 2079 / JCM 5827 / CCUG 10774 / NCTC 10582 / VPI-5482 / E50).